The sequence spans 38 residues: Photosystem II reaction center protein Y (38 aa).

The chain crosses the membrane as a helical span at residues Ile-2–Ile-20.

This sequence belongs to the PsbY family. As to quaternary structure, PSII is composed of 1 copy each of membrane proteins PsbA, PsbB, PsbC, PsbD, PsbE, PsbF, PsbH, PsbI, PsbJ, PsbK, PsbL, PsbM, PsbT, PsbX, PsbY, Psb30/Ycf12, peripheral proteins PsbO, CyanoQ (PsbQ), PsbU, PsbV and a large number of cofactors. It forms dimeric complexes.

It is found in the cellular thylakoid membrane. In terms of biological role, loosely associated component of the core of photosystem II (PSII), it is not always seen in crystals. PSII is a light-driven water plastoquinone oxidoreductase, using light energy to abstract electrons from H(2)O, generating a proton gradient subsequently used for ATP formation. The chain is Photosystem II reaction center protein Y from Prochlorococcus marinus (strain MIT 9313).